The chain runs to 358 residues: Photosystem II protein D1 2 (358 aa).

3 helical membrane passes run 28–45, 117–132, and 141–155; these read YVGW…AATT, HFLI…QWEL, and WICV…AAFA. H117 is a chlorophyll a binding site. Residue Y125 participates in pheophytin a binding. [CaMn4O5] cluster is bound by residues D169 and E188. The chain crosses the membrane as a helical span at residues 196-217; sequence FHMLGVAGVFGGSLFSAMHGSL. A chlorophyll a-binding site is contributed by H197. A quinone-binding positions include H214 and 263–264; that span reads SF. H214 is a Fe cation binding site. H271 serves as a coordination point for Fe cation. The chain crosses the membrane as a helical span at residues 273-287; the sequence is FLAAWPVVGIWFTSM. Residues H331, E332, D341, and A343 each coordinate [CaMn4O5] cluster. Residues 344–358 constitute a propeptide that is removed on maturation; the sequence is ATESTPVALQAPTIG.

The protein belongs to the reaction center PufL/M/PsbA/D family. PSII is composed of 1 copy each of membrane proteins PsbA, PsbB, PsbC, PsbD, PsbE, PsbF, PsbH, PsbI, PsbJ, PsbK, PsbL, PsbM, PsbT, PsbX, PsbY, PsbZ, Psb30/Ycf12, peripheral proteins PsbO, CyanoQ (PsbQ), PsbU, PsbV and a large number of cofactors. It forms dimeric complexes. The D1/D2 heterodimer binds P680, chlorophylls that are the primary electron donor of PSII, and subsequent electron acceptors. It shares a non-heme iron and each subunit binds pheophytin, quinone, additional chlorophylls, carotenoids and lipids. D1 provides most of the ligands for the Mn4-Ca-O5 cluster of the oxygen-evolving complex (OEC). There is also a Cl(-1) ion associated with D1 and D2, which is required for oxygen evolution. The PSII complex binds additional chlorophylls, carotenoids and specific lipids. is required as a cofactor. Tyr-160 forms a radical intermediate that is referred to as redox-active TyrZ, YZ or Y-Z. In terms of processing, C-terminally processed by CtpA; processing is essential to allow assembly of the oxygen-evolving complex and thus photosynthetic growth.

The protein localises to the cellular thylakoid membrane. The enzyme catalyses 2 a plastoquinone + 4 hnu + 2 H2O = 2 a plastoquinol + O2. Its function is as follows. Photosystem II (PSII) is a light-driven water:plastoquinone oxidoreductase that uses light energy to abstract electrons from H(2)O, generating O(2) and a proton gradient subsequently used for ATP formation. It consists of a core antenna complex that captures photons, and an electron transfer chain that converts photonic excitation into a charge separation. The D1/D2 (PsbA/PsbD) reaction center heterodimer binds P680, the primary electron donor of PSII as well as several subsequent electron acceptors. This is Photosystem II protein D1 2 from Synechococcus sp. (strain WH7803).